A 245-amino-acid chain; its full sequence is 1-(5-phosphoribosyl)-5-[(5-phosphoribosylamino)methylideneamino] imidazole-4-carboxamide isomerase (245 aa).

The active-site Proton acceptor is Asp7. Residue Asp129 is the Proton donor of the active site.

The protein belongs to the HisA/HisF family.

It localises to the cytoplasm. The enzyme catalyses 1-(5-phospho-beta-D-ribosyl)-5-[(5-phospho-beta-D-ribosylamino)methylideneamino]imidazole-4-carboxamide = 5-[(5-phospho-1-deoxy-D-ribulos-1-ylimino)methylamino]-1-(5-phospho-beta-D-ribosyl)imidazole-4-carboxamide. It participates in amino-acid biosynthesis; L-histidine biosynthesis; L-histidine from 5-phospho-alpha-D-ribose 1-diphosphate: step 4/9. This is 1-(5-phosphoribosyl)-5-[(5-phosphoribosylamino)methylideneamino] imidazole-4-carboxamide isomerase from Shewanella sp. (strain W3-18-1).